The chain runs to 210 residues: Kalata-B2 (210 aa).

The N-terminal stretch at 1-22 (MAKFTNCLVLSLLLAAFVGAFG) is a signal peptide. Positions 23–66 (AEFSEADKATLVNDIAENIQKEILGEVKTSETVLTMFLKEMQLK) are excised as a propeptide. Positions 67–95 (GLPVCGETCFGGTCNTPGCSCTWPICTRD) form a cross-link, cyclopeptide (Gly-Asp). 3 cysteine pairs are disulfide-bonded: Cys71–Cys85, Cys75–Cys87, and Cys80–Cys92. A propeptide spanning residues 96 to 120 (SLPMRAGGKTSETTLHMFLKEMQLK) is cleaved from the precursor. Residues 121-149 (GLPVCGETCFGGTCNTPGCSCTWPICTRD) constitute a cross-link (cyclopeptide (Gly-Asp)). 3 cysteine pairs are disulfide-bonded: Cys125-Cys139, Cys129-Cys141, and Cys134-Cys146. Residues 150–174 (SLPMSAGGKTSETTLHMFLKEMQLK) constitute a propeptide that is removed on maturation. The cyclopeptide (Gly-Asp) cross-link spans 175 to 203 (GLPVCGETCFGGTCNTPGCSCTWPICTRD). 3 cysteine pairs are disulfide-bonded: Cys179-Cys193, Cys183-Cys195, and Cys188-Cys200. The propeptide occupies 204 to 210 (SLPLVAA).

Belongs to the cyclotide family. Moebius subfamily. Post-translationally, kalata-B2 is a cyclic peptide which occurs in three forms: with unmodified Trp, with Trp oxidized to form N-formylkynurenine and with Trp oxidized to form kynurenine. Oxidation is enhanced by exposure to sunlight.

Probably participates in a plant defense mechanism. Inhibitory effect on the growth and development of larvae from Helicoverpa punctigera. Has hemolytic activity. The sequence is that of Kalata-B2 (OAK4) from Oldenlandia affinis.